Reading from the N-terminus, the 376-residue chain is Succinyl-diaminopimelate desuccinylase (376 aa).

Histidine 64 provides a ligand contact to Zn(2+). Aspartate 66 is a catalytic residue. Aspartate 97 is a binding site for Zn(2+). Glutamate 131 functions as the Proton acceptor in the catalytic mechanism. Residues glutamate 132, glutamate 160, and histidine 347 each contribute to the Zn(2+) site.

Belongs to the peptidase M20A family. DapE subfamily. As to quaternary structure, homodimer. Zn(2+) serves as cofactor. Requires Co(2+) as cofactor.

It carries out the reaction N-succinyl-(2S,6S)-2,6-diaminopimelate + H2O = (2S,6S)-2,6-diaminopimelate + succinate. It participates in amino-acid biosynthesis; L-lysine biosynthesis via DAP pathway; LL-2,6-diaminopimelate from (S)-tetrahydrodipicolinate (succinylase route): step 3/3. Catalyzes the hydrolysis of N-succinyl-L,L-diaminopimelic acid (SDAP), forming succinate and LL-2,6-diaminopimelate (DAP), an intermediate involved in the bacterial biosynthesis of lysine and meso-diaminopimelic acid, an essential component of bacterial cell walls. The polypeptide is Succinyl-diaminopimelate desuccinylase (Wigglesworthia glossinidia brevipalpis).